The following is a 457-amino-acid chain: Ribosome biogenesis protein YTM1 (457 aa).

The segment at 8–89 (VKVKFFTREK…ETTLTVEYTR (82 aa)) is ubiquitin-like (UBL) domain. Positions 99-457 (NFNNDDWVSA…INKGDNIFKN (359 aa)) are sufficient for interaction with ERB1 and association with 66S pre-ribosomes. 7 WD repeats span residues 101–140 (NNDD…EKQY), 142–180 (GHTG…GSVS), 203–241 (GHKA…MTAI), 282–322 (SHTG…CIDT), 324–363 (TTSY…SAKI), 370–410 (GHKN…PMYT), and 421–457 (GVND…IFKN). Residues 172–191 (TKNDDGSVSNNTGDENDEEN) are disordered.

It belongs to the WD repeat WDR12/YTM1 family. In terms of assembly, component of the NOP7 complex, composed of ERB1, NOP7 and YTM1. The complex is held together by ERB1, which interacts with NOP7 via its N-terminal domain and with YTM1 via a high-affinity interaction between the seven-bladed beta-propeller domains of the 2 proteins. The NOP7 complex associates with the 66S pre-ribosome. Interacts (via UBL domain) with MDN1 (via VWFA/MIDAS domain).

The protein resides in the nucleus. It localises to the nucleolus. It is found in the nucleoplasm. Its function is as follows. Component of the NOP7 complex, which is required for maturation of the 25S and 5.8S ribosomal RNAs and formation of the 60S ribosome. The polypeptide is Ribosome biogenesis protein YTM1 (Candida glabrata (strain ATCC 2001 / BCRC 20586 / JCM 3761 / NBRC 0622 / NRRL Y-65 / CBS 138) (Yeast)).